We begin with the raw amino-acid sequence, 355 residues long: Tetraacyldisaccharide 4'-kinase (355 aa).

An ATP-binding site is contributed by 54 to 61 (TVGGAGKT).

The protein belongs to the LpxK family.

The catalysed reaction is a lipid A disaccharide + ATP = a lipid IVA + ADP + H(+). It functions in the pathway glycolipid biosynthesis; lipid IV(A) biosynthesis; lipid IV(A) from (3R)-3-hydroxytetradecanoyl-[acyl-carrier-protein] and UDP-N-acetyl-alpha-D-glucosamine: step 6/6. Functionally, transfers the gamma-phosphate of ATP to the 4'-position of a tetraacyldisaccharide 1-phosphate intermediate (termed DS-1-P) to form tetraacyldisaccharide 1,4'-bis-phosphate (lipid IVA). The sequence is that of Tetraacyldisaccharide 4'-kinase from Rhizobium rhizogenes (strain K84 / ATCC BAA-868) (Agrobacterium radiobacter).